The primary structure comprises 354 residues: Uroporphyrinogen decarboxylase (354 aa).

Substrate contacts are provided by residues 30 to 34 (RQAGR), aspartate 79, tyrosine 154, serine 209, and histidine 333.

The protein belongs to the uroporphyrinogen decarboxylase family. As to quaternary structure, homodimer.

The protein resides in the cytoplasm. It carries out the reaction uroporphyrinogen III + 4 H(+) = coproporphyrinogen III + 4 CO2. It functions in the pathway porphyrin-containing compound metabolism; protoporphyrin-IX biosynthesis; coproporphyrinogen-III from 5-aminolevulinate: step 4/4. Functionally, catalyzes the decarboxylation of four acetate groups of uroporphyrinogen-III to yield coproporphyrinogen-III. This Mycobacterium sp. (strain JLS) protein is Uroporphyrinogen decarboxylase.